Consider the following 209-residue polypeptide: Chaperone protein TorD (209 aa).

The protein belongs to the TorD/DmsD family. TorD subfamily.

The protein resides in the cytoplasm. Its function is as follows. Involved in the biogenesis of TorA. Acts on TorA before the insertion of the molybdenum cofactor and, as a result, probably favors a conformation of the apoenzyme that is competent for acquiring the cofactor. This Shewanella sp. (strain ANA-3) protein is Chaperone protein TorD.